The following is a 736-amino-acid chain: Eukaryotic translation initiation factor 3 subunit B (736 aa).

Positions 1-94 (MAAVFDDIRL…LFIEFEDAGA (94 aa)) are sufficient for interaction with HCR1 and TIF32. Positions 1–219 (MAAVFDDIRL…GIASWGGPQF (219 aa)) are sufficient for interaction with PIC8. The 84-residue stretch at 37–120 (RYVVVDGAPV…HRLWVNGLDD (84 aa)) folds into the RRM domain. WD repeat units follow at residues 140–182 (EFEA…PENV), 186–224 (RRNW…RLRR), 226–244 (AHPD…YLVT), 245–284 (FSSE…CVKT), 288–328 (PPQQ…QLLG), 332–375 (MKIE…QSCK), 443–483 (EIKD…VSFY), 511–557 (AIDG…TEKI), 566–604 (ATLR…KAEN), and 616–662 (VREE…QDAM).

Belongs to the eIF-3 subunit B family. As to quaternary structure, component of the eukaryotic translation initiation factor 3 (eIF-3) complex.

The protein localises to the cytoplasm. Its function is as follows. RNA-binding component of the eukaryotic translation initiation factor 3 (eIF-3) complex, which is involved in protein synthesis of a specialized repertoire of mRNAs and, together with other initiation factors, stimulates binding of mRNA and methionyl-tRNAi to the 40S ribosome. The eIF-3 complex specifically targets and initiates translation of a subset of mRNAs involved in cell proliferation. The protein is Eukaryotic translation initiation factor 3 subunit B of Eremothecium gossypii (strain ATCC 10895 / CBS 109.51 / FGSC 9923 / NRRL Y-1056) (Yeast).